A 757-amino-acid chain; its full sequence is Filensin (757 aa).

The segment at 1-39 is head; the sequence is MYRRSYVFQTRKEQYERAEEAPRAAEPDRLAEARAAAPN. S5 carries the post-translational modification Phosphoserine. One can recognise an IF rod domain in the interval 39-319; that stretch reads NLAALQGLGE…RIIENEGNRL (281 aa). A coil 1A region spans residues 40–74; it reads LAALQGLGERVAAHVQRARALEQRHAVLRRQLDAF. A41 is modified (N-acetylalanine). The tract at residues 75 to 83 is linker 1; that stretch reads QRLDELAGP. Positions 84 to 183 are coil 1B; the sequence is EDALARHVEG…RYKKNLLEIQ (100 aa). The tract at residues 184-200 is linker 12; the sequence is TYVTILQQIIQTTPQAA. Residues 201–319 form a coil 2 region; sequence AITSGMREEK…RIIENEGNRL (119 aa). A tail region spans residues 320–756; the sequence is SSAFIETPIT…KKLGEKGSSS (437 aa). S340 and S419 each carry phosphoserine. Disordered regions lie at residues 406 to 436 and 493 to 705; these read EGESKLEPGDEEASPPTQEGAPEDVPDGGKI and GVVV…PPRK. G433 is lipidated: N-myristoyl glycine. Over residues 493-512 the composition is skewed to low complexity; that stretch reads GVVVSKGDDSVPPDSGVEPS. S512 carries the post-translational modification Phosphoserine. Residues 528 to 658 are compositionally biased toward basic and acidic residues; sequence QEKEDGLKEE…KQDDQKEEGA (131 aa). Copy 1 of the repeat occupies 532–545; sequence DGLKEEGGPPEGKG. A 7 X 14 AA tandem repeats region spans residues 532 to 622; the sequence is DGLKEEGGPP…EEEGPLQKKE (91 aa). Residues 546–552 form a 2; truncated repeat; it reads EPPEGKG. 5 repeat units span residues 553 to 566, 567 to 580, 581 to 594, 595 to 608, and 609 to 622. 2 positions are modified to phosphothreonine: T628 and T674. Residues S701, S754, and S755 each carry the phosphoserine modification.

This sequence belongs to the intermediate filament family. Part of a complex required for lens intermediate filament formation composed of BFSP1, BFSP2 and CRYAA. Identified in a complex that contains VIM, EZR, AHNAK, BFSP1, BFSP2, ANK2, PLEC, PRX and spectrin. Found in a complex composed of PPL (via C-terminal linker domain), BFSP1 and BFSP2 in the retinal lens. Within the complex interacts with BFSP2. Interacts (via C-terminus) with MIP (via C-terminus) in aged lens fiber cells. Post-translationally, proteolytically cleaved during lens cell fiber differentiation with increased fragmentation as fiber cell age increases. In terms of processing, myristoylated at Gly-433 following proteolytic cleavage at Asp-432. Acetylated at Ala-41 following proteolytic cleavage at Leu-40. In terms of tissue distribution, abundantly expressed in both the inner and outer cortex of the retina, expressed at a lower level in the nucleus of the retina (at protein level). Detected in eye lens fiber cells (at protein level).

The protein resides in the cell membrane. Its subcellular location is the cytoplasm. It localises to the cytoskeleton. It is found in the cell cortex. Required for the correct formation of lens intermediate filaments as part of a complex composed of BFSP1, BFSP2 and CRYAA. Involved in altering the calcium regulation of MIP water permeability. The polypeptide is Filensin (BFSP1) (Bos taurus (Bovine)).